The sequence spans 122 residues: Large ribosomal subunit protein bL12 (122 aa).

It belongs to the bacterial ribosomal protein bL12 family. As to quaternary structure, homodimer. Part of the ribosomal stalk of the 50S ribosomal subunit. Forms a multimeric L10(L12)X complex, where L10 forms an elongated spine to which 2 to 4 L12 dimers bind in a sequential fashion. Binds GTP-bound translation factors.

Functionally, forms part of the ribosomal stalk which helps the ribosome interact with GTP-bound translation factors. Is thus essential for accurate translation. This chain is Large ribosomal subunit protein bL12, found in Shewanella putrefaciens (strain CN-32 / ATCC BAA-453).